A 78-amino-acid chain; its full sequence is Putative protein PeaD (78 aa).

It belongs to the phage P protein family.

The chain is Putative protein PeaD (peaD) from Escherichia coli (strain K12).